Here is a 231-residue protein sequence, read N- to C-terminus: Heptaprenylglyceryl phosphate synthase (231 aa).

K12 contributes to the sn-glycerol 1-phosphate binding site. 2 residues coordinate Mg(2+): D14 and T40. Residues 159–164 (YLEYSG), G189, and 209–210 (GN) each bind sn-glycerol 1-phosphate.

It belongs to the GGGP/HepGP synthase family. Group I subfamily. Homodimer. Mg(2+) serves as cofactor.

The catalysed reaction is sn-glycerol 1-phosphate + all-trans-heptaprenyl diphosphate = 3-heptaprenyl-sn-glycero-1-phosphate + diphosphate. Its pathway is membrane lipid metabolism; glycerophospholipid metabolism. Functionally, prenyltransferase that catalyzes in vivo the transfer of the heptaprenyl moiety of heptaprenyl pyrophosphate (HepPP; 35 carbon atoms) to the C3 hydroxyl of sn-glycerol-1-phosphate (G1P), producing heptaprenylglyceryl phosphate (HepGP). This reaction is an ether-bond-formation step in the biosynthesis of archaea-type G1P-based membrane lipids found in Bacillales. The sequence is that of Heptaprenylglyceryl phosphate synthase from Staphylococcus haemolyticus (strain JCSC1435).